A 494-amino-acid polypeptide reads, in one-letter code: Hydroxyneurosporene desaturase (494 aa).

The protein belongs to the carotenoid/retinoid oxidoreductase family.

It carries out the reaction rhodopin + A = (3E)-3,4-didehydrorhodopin + AH2. It functions in the pathway carotenoid biosynthesis; spheroidene biosynthesis. Catalyzes the introduction of C-3,4 double bonds into 1-hydroxyneurosporene (1-HO-Neu) to yield demethylspheroidene (DMS). The protein is Hydroxyneurosporene desaturase (crtD) of Rhodobacter capsulatus (strain ATCC BAA-309 / NBRC 16581 / SB1003).